A 356-amino-acid chain; its full sequence is Pyrimidine monooxygenase RutA (356 aa).

FMN contacts are provided by residues 49-50 (IK), asparagine 115, glutamate 124, 140-141 (RY), and serine 190.

It belongs to the NtaA/SnaA/DszA monooxygenase family. RutA subfamily.

It catalyses the reaction uracil + FMNH2 + NADH + O2 = (Z)-3-ureidoacrylate + FMN + NAD(+) + H2O + H(+). The catalysed reaction is thymine + FMNH2 + NADH + O2 = (Z)-2-methylureidoacrylate + FMN + NAD(+) + H2O + H(+). Its function is as follows. Catalyzes the pyrimidine ring opening between N-3 and C-4 by an unusual flavin hydroperoxide-catalyzed mechanism, adding oxygen atoms in the process to yield ureidoacrylate peracid, that immediately reacts with FMN forming ureidoacrylate and FMN-N(5)-oxide. The FMN-N(5)-oxide reacts spontaneously with NADH to produce FMN. Requires the flavin reductase RutF to regenerate FMN in vivo. The chain is Pyrimidine monooxygenase RutA from Haliangium ochraceum (strain DSM 14365 / JCM 11303 / SMP-2).